Consider the following 122-residue polypeptide: Large ribosomal subunit protein uL24 (122 aa).

Belongs to the universal ribosomal protein uL24 family. Part of the 50S ribosomal subunit.

Its function is as follows. One of two assembly initiator proteins, it binds directly to the 5'-end of the 23S rRNA, where it nucleates assembly of the 50S subunit. In terms of biological role, one of the proteins that surrounds the polypeptide exit tunnel on the outside of the subunit. The polypeptide is Large ribosomal subunit protein uL24 (Trichodesmium erythraeum (strain IMS101)).